A 506-amino-acid polypeptide reads, in one-letter code: GTPase Der (506 aa).

EngA-type G domains are found at residues Pro-3–Leu-166 and Ile-218–Thr-391. GTP is bound by residues Gly-9–Ser-16, Asp-56–Ile-60, Asn-118–Asp-121, Gly-224–Ser-231, Asp-271–Val-275, and Asn-336–Asp-339. The 85-residue stretch at Gln-392–Asn-476 folds into the KH-like domain.

Belongs to the TRAFAC class TrmE-Era-EngA-EngB-Septin-like GTPase superfamily. EngA (Der) GTPase family. Associates with the 50S ribosomal subunit.

Functionally, GTPase that plays an essential role in the late steps of ribosome biogenesis. This is GTPase Der from Actinobacillus pleuropneumoniae serotype 7 (strain AP76).